The following is a 214-amino-acid chain: Molybdenum cofactor guanylyltransferase (214 aa).

GTP is bound by residues 18–20, lysine 31, aspartate 77, and aspartate 112; that span reads LAG. Aspartate 112 contacts Mg(2+).

Belongs to the MobA family. As to quaternary structure, monomer. Requires Mg(2+) as cofactor.

The protein resides in the cytoplasm. It carries out the reaction Mo-molybdopterin + GTP + H(+) = Mo-molybdopterin guanine dinucleotide + diphosphate. Functionally, transfers a GMP moiety from GTP to Mo-molybdopterin (Mo-MPT) cofactor (Moco or molybdenum cofactor) to form Mo-molybdopterin guanine dinucleotide (Mo-MGD) cofactor. In Rhodopseudomonas palustris (strain HaA2), this protein is Molybdenum cofactor guanylyltransferase.